We begin with the raw amino-acid sequence, 378 residues long: tRNA (guanine(37)-N(1))-methyltransferase (378 aa).

S-adenosyl-L-methionine contacts are provided by residues H196, 234-235, 262-263, and N282; these read DL and DA.

Belongs to the class I-like SAM-binding methyltransferase superfamily. TRM5/TYW2 family. In terms of assembly, monomer.

The protein localises to the mitochondrion matrix. The protein resides in the nucleus. It is found in the cytoplasm. It carries out the reaction guanosine(37) in tRNA + S-adenosyl-L-methionine = N(1)-methylguanosine(37) in tRNA + S-adenosyl-L-homocysteine + H(+). Functionally, specifically methylates the N1 position of guanosine-37 in various cytoplasmic and mitochondrial tRNAs. Methylation is not dependent on the nature of the nucleoside 5' of the target nucleoside. This is the first step in the biosynthesis of wybutosine (yW), a modified base adjacent to the anticodon of tRNAs and required for accurate decoding. In Trichomonas vaginalis (strain ATCC PRA-98 / G3), this protein is tRNA (guanine(37)-N(1))-methyltransferase.